We begin with the raw amino-acid sequence, 804 residues long: DNA mismatch repair protein MutS (804 aa).

614–621 (GPNMAGKS) is an ATP binding site.

Belongs to the DNA mismatch repair MutS family.

This protein is involved in the repair of mismatches in DNA. It is possible that it carries out the mismatch recognition step. This protein has a weak ATPase activity. This Ehrlichia ruminantium (strain Gardel) protein is DNA mismatch repair protein MutS.